A 252-amino-acid chain; its full sequence is Probable NADP-dependent dehydrogenase HI_1430 (252 aa).

L7 to I31 is an NADP(+) binding site. S137 contacts substrate. Catalysis depends on Y150, which acts as the Proton acceptor.

This sequence belongs to the short-chain dehydrogenases/reductases (SDR) family.

The sequence is that of Probable NADP-dependent dehydrogenase HI_1430 from Haemophilus influenzae (strain ATCC 51907 / DSM 11121 / KW20 / Rd).